Consider the following 214-residue polypeptide: MKFFLDTANVAAIKAINELGVVDGVTTNPTIISREGRDFETVIKEICDIVDGPISAEVTGLTADAMVEEARSIAKWHDNVVVKIPMTTEGLKATNILSKEGIKTNVTLIFTVSQGLMAMKAGATYISPFIGRLEDIGTDAYQLISDLREIIDLYDFQAEIIAASIRTTAHVEAVAKLGAHIATIPDPLFAKMTQHPLTTNGLKTFMEDWASFKK.

Catalysis depends on lysine 83, which acts as the Schiff-base intermediate with substrate.

Belongs to the transaldolase family. Type 3B subfamily.

It localises to the cytoplasm. It catalyses the reaction D-sedoheptulose 7-phosphate + D-glyceraldehyde 3-phosphate = D-erythrose 4-phosphate + beta-D-fructose 6-phosphate. Its pathway is carbohydrate degradation; pentose phosphate pathway; D-glyceraldehyde 3-phosphate and beta-D-fructose 6-phosphate from D-ribose 5-phosphate and D-xylulose 5-phosphate (non-oxidative stage): step 2/3. In terms of biological role, transaldolase is important for the balance of metabolites in the pentose-phosphate pathway. This chain is Probable transaldolase (tal), found in Streptococcus pyogenes serotype M1.